Reading from the N-terminus, the 250-residue chain is Sperm-egg fusion protein Juno (250 aa).

The N-terminal stretch at 1–19 (MACWWPLLLELWTVMPTWA) is a signal peptide. Cystine bridges form between cysteine 27–cysteine 55, cysteine 47–cysteine 95, cysteine 56–cysteine 99, cysteine 79–cysteine 172, cysteine 86–cysteine 143, cysteine 132–cysteine 206, cysteine 136–cysteine 186, and cysteine 149–cysteine 166. Residues 62–81 (WEAHLDVSPLYNFSLFHCGL) are important for interaction with IZUMO1. The N-linked (GlcNAc...) asparagine glycan is linked to asparagine 73. Serine 228 carries GPI-anchor amidated serine lipidation. Residues 229–250 (SAPSWELSYTIMVCSLFLPFLS) constitute a propeptide that is removed on maturation.

Belongs to the folate receptor family. Monomer. Interacts with IZUMO1; the interaction is direct. IZUMO1 and IZUMO1R/JUNO form a complex with 1:1 stoichiometry. Interacts with FCRL3/MAIA; FCRL3/MAIA replaces IZUMO1R/JUNO as IZUMO1 receptor after sperm-egg adhesion, thereby permitting species-specific gamete fusion. Interacts with WDR54. The protein is rapidly cleaved following fertilization, being only weakly detectable in zona-intact fertilized eggs at telophase II and undetectable at the pronuclear stage. Sheding is probably required to block to polyspermy and ensuring egg fusion with a single sperm. As to expression, expressed in unfertilized oocytes (at protein level).

It localises to the cell membrane. It is found in the cell projection. Its subcellular location is the microvillus membrane. Its function is as follows. Receptor for IZUMO1 present at the cell surface of oocytes (oolemma), which is essential for species-specific gamete recognition and fertilization. The IZUMO1:IZUMO1R/JUNO interaction is a necessary adhesion event between sperm and egg that is required for fertilization but is not sufficient for cell fusion. The ligand-receptor interaction probably does not act as a membrane 'fusogen'. Does not bind folate. This is Sperm-egg fusion protein Juno from Homo sapiens (Human).